The primary structure comprises 549 residues: MLNQKIQNPNPDELMIEVDLCYELDPYELKLDEMIEAEPEPEMIEGLPASDALTPADRYLELFEHVQSAKIFPDSKTFPDCAPKMDPLDILIRYRKVRRHRDFDLRKFVENHFWLPEVYSSEYVSDPQNSLKEHIDQLWPVLTREPQDHIPWSSLLALPQSYIVPGGRFSETYYWDSYFTMLGLAESGREDLLKCMADNFAWMIENYGHIPNGNRTYYLSRSQPPVFALMVELFEEDGVRGARRYLDHLKMEYAFWMDGAESLIPNQAYRHVVRMPDGSLLNRYWDDRDTPRDESWLEDVETAKHSGRPPNEVYRDLRAGAASGWDYSSRWLRDTGRLASIRTTQFIPIDLNAFLFKLESAIANISALKGEKETEALFRQKASARRDAVNRYLWDDENGIYRDYDWRREQLALFSAAAIVPLYVGMANHEQADRLANAVRSRLLTPGGILASEYETGEQWDKPNGWAPLQWMAIQGFKMYGDDLLGDEIARSWLKTVNQFYLEQHKMIEKYHIADGVPREGGGGEYPLQDGFGWTNGVVRRLIGLYGEP.

Residues arginine 168, 175–176, asparagine 212, 221–223, 292–294, and glycine 324 each bind substrate; these read WD, RSQ, and RDE. Catalysis depends on proton donor/acceptor residues aspartate 326 and glutamate 509. Residue glutamate 525 participates in substrate binding.

The protein belongs to the glycosyl hydrolase 37 family. Monomer.

Its subcellular location is the cytoplasm. It carries out the reaction alpha,alpha-trehalose + H2O = alpha-D-glucose + beta-D-glucose. Its pathway is glycan degradation; trehalose degradation; D-glucose from alpha,alpha-trehalose: step 1/1. Functionally, hydrolyzes trehalose to glucose. Could be involved, in cells returning to low osmolarity conditions, in the utilization of the accumulated cytoplasmic trehalose, which was synthesized in response to high osmolarity. In Escherichia coli O139:H28 (strain E24377A / ETEC), this protein is Cytoplasmic trehalase.